We begin with the raw amino-acid sequence, 276 residues long: Cytoplasmic envelopment protein 1 (276 aa).

This sequence belongs to the herpesviridae cytoplasmic envelopment protein 1 family.

It localises to the virion. The protein resides in the virion tegument. Its subcellular location is the host cytoplasm. The protein localises to the host Golgi apparatus. Its function is as follows. Plays a critical role in cytoplasmic virus egress. Participates in the final step of tegumentation and envelope acquisition within the host cytoplasm. This is Cytoplasmic envelopment protein 1 (42) from Equus caballus (Horse).